The chain runs to 110 residues: Large ribosomal subunit protein uL22 (110 aa).

This sequence belongs to the universal ribosomal protein uL22 family. As to quaternary structure, part of the 50S ribosomal subunit.

This protein binds specifically to 23S rRNA; its binding is stimulated by other ribosomal proteins, e.g. L4, L17, and L20. It is important during the early stages of 50S assembly. It makes multiple contacts with different domains of the 23S rRNA in the assembled 50S subunit and ribosome. Functionally, the globular domain of the protein is located near the polypeptide exit tunnel on the outside of the subunit, while an extended beta-hairpin is found that lines the wall of the exit tunnel in the center of the 70S ribosome. This is Large ribosomal subunit protein uL22 from Pseudoalteromonas atlantica (strain T6c / ATCC BAA-1087).